Consider the following 345-residue polypeptide: UPF0284 protein STK_21430 (345 aa).

Belongs to the UPF0284 family.

The chain is UPF0284 protein STK_21430 from Sulfurisphaera tokodaii (strain DSM 16993 / JCM 10545 / NBRC 100140 / 7) (Sulfolobus tokodaii).